The following is a 118-amino-acid chain: Large ribosomal subunit protein bL20 (118 aa).

This sequence belongs to the bacterial ribosomal protein bL20 family.

Its function is as follows. Binds directly to 23S ribosomal RNA and is necessary for the in vitro assembly process of the 50S ribosomal subunit. It is not involved in the protein synthesizing functions of that subunit. The sequence is that of Large ribosomal subunit protein bL20 from Caldicellulosiruptor saccharolyticus (strain ATCC 43494 / DSM 8903 / Tp8T 6331).